The sequence spans 202 residues: Recombination protein RecR (202 aa).

The C4-type zinc finger occupies 57 to 72 (CRDCRTFTEDDICAVC). The 96-residue stretch at 81 to 176 (GQICVVESPA…PATRIAHGVP (96 aa)) folds into the Toprim domain.

This sequence belongs to the RecR family.

In terms of biological role, may play a role in DNA repair. It seems to be involved in an RecBC-independent recombinational process of DNA repair. It may act with RecF and RecO. The polypeptide is Recombination protein RecR (Photobacterium profundum (strain SS9)).